Reading from the N-terminus, the 1451-residue chain is DNA excision repair protein ERCC-6-like (1451 aa).

A TPR 1 repeat occupies 27–60; sequence YDRYRQKGKEAALNGELPRALELFQLAYQLQPSE. One can recognise a Helicase ATP-binding domain in the interval 118–286; that stretch reads SLYRDGRKGG…WALFDFACQG (169 aa). 131–138 is an ATP binding site; sequence DDMGLGKT. The short motif at 237–240 is the DEAH box element; that stretch reads DEAH. Residues 479-639 form the Helicase C-terminal domain; sequence FVVSLMECLR…PFRYFSKQEL (161 aa). Disordered regions lie at residues 647-669, 778-804, 935-1006, 1035-1054, 1063-1083, 1096-1140, and 1182-1343; these read DTRS…RSDT, NSFD…ETAS, DDTS…ATTD, DEEV…EFQL, LEEP…NYND, RSTP…LTSS, and LLEN…SAEL. Residues 781 to 804 are compositionally biased toward acidic residues; the sequence is DEPEFEEDEQNLPSAEDAEMETAS. Polar residues-rich tracts occupy residues 944–964 and 992–1002; these read SDFN…SPSL and QVLSSPLSQHE. Serine 961 bears the Phosphoserine mark. Positions 1035-1050 are enriched in acidic residues; that stretch reads DEEVHEVEESAAEESP. Positions 1063–1074 are enriched in basic and acidic residues; sequence LEEPSINHDKQN. A compositionally biased stretch (acidic residues) spans 1121–1132; that stretch reads DTEEEEEEEEES. Polar residues predominate over residues 1213-1230; it reads VQTSSGDNSKSYETSEAN. Residues 1244–1278 show a composition bias toward basic and acidic residues; it reads YREGKNTSDKVSESNETHSEEFAEEEKPSGDKSES. The segment covering 1310–1341 has biased composition (acidic residues); that stretch reads SEADESVVEEEEPSGETLNTEESEMGEEEESA. Residues 1402–1435 form a TPR 2 repeat; it reads YNLLVLSGKQSLAEGRKQEALDFFLKAIDINTGD.

Belongs to the SNF2/RAD54 helicase family.

Its subcellular location is the chromosome. It localises to the centromere. It is found in the kinetochore. The catalysed reaction is ATP + H2O = ADP + phosphate + H(+). Functionally, DNA helicase that acts as a tension sensor that associates with catenated DNA which is stretched under tension until it is resolved during anaphase. Functions as ATP-dependent DNA translocase. Can promote Holliday junction branch migration (in vitro). The polypeptide is DNA excision repair protein ERCC-6-like (ercc6l) (Danio rerio (Zebrafish)).